A 167-amino-acid chain; its full sequence is Multifunctional Ser/Thr-tRNA deacylase ProXp-y (167 aa).

The protein localises to the cytoplasm. It catalyses the reaction L-seryl-tRNA(Lys) + H2O = tRNA(Lys) + L-serine. It carries out the reaction L-threonyl-tRNA(Lys) + H2O = tRNA(Lys) + L-threonine. The enzyme catalyses L-homoseryl-tRNA(Lys) + H2O = tRNA(Lys) + L-homoserine + H(+). The catalysed reaction is L-seryl-tRNA(Ala) + H2O = tRNA(Ala) + L-serine. It catalyses the reaction L-homoseryl-tRNA(Ser) + H2O = tRNA(Ser) + L-homoserine + H(+). It carries out the reaction L-seryl-tRNA(Thr) + H2O = tRNA(Thr) + L-serine. The enzyme catalyses L-threonyl-tRNA(Ile) + H2O = tRNA(Ile) + L-threonine. The catalysed reaction is L-threonyl-tRNA(Val) + H2O = tRNA(Val) + L-threonine. It catalyses the reaction L-threonyl-tRNA(Ser) + H2O = tRNA(Ser) + L-threonine. Functionally, an aminoacyl-tRNA editing enzyme that deacylates Ser-tRNA and/or Thr-tRNA mischarged by lysyl-tRNA synthetase (LysRS), threonyl-tRNA synthetase (ThrRS), seryl-tRNA synthetase (SerRS), alanyl-tRNA synthetase (AlaRS), valyl-tRNA synthetase (ValRS) and isoleucyl-tRNA synthetase (IleRS) in vitro. Also deacylates mischarged Hse-tRNA(Lys) and Hse-tRNA(Ser), and cognate Ser-tRNA(Ser) and Thr-tRNA(Thr) in vitro. The presence of cognate ThrRS abolishes the Thr-tRNA(Thr) deacylase activity, hence this activity is not applicable physiologically. Not able to remove the amino acid moiety from cognate Val-tRNA(Val), Ile-tRNA(Ile), Lys-tRNA(Lys), Ala-tRNA(Ala) or Pro-tRNA(Pro), or from incorrectly charged Ala-tRNA(Pro), Cys-tRNA(Pro) or Leu-tRNA(Pro) in vitro. May be required in vivo to prevent mistranslation and to maintain growth when the error prone stress-inducible lysyl-tRNA synthetase (LysU) is expressed under environmental pressure. The polypeptide is Multifunctional Ser/Thr-tRNA deacylase ProXp-y (Escherichia coli O157:H7).